The chain runs to 213 residues: 24 kDa ookinete surface protein (213 aa).

The N-terminal stretch at 1–28 (MNFKYSFIFLFFIQLAIRYNNAKITVDT) is a signal peptide. One can recognise an EGF-like 1; truncated domain in the interval 30–59 (CKGGKLIQMSNHYECKCPSGYALKTENTCE). 2 EGF-like domains span residues 60–108 (PIVK…NICK) and 108–148 (KPTR…GKCT). Disulfide bonds link Cys64–Cys80, Cys74–Cys94, Cys96–Cys107, Cys112–Cys122, Cys117–Cys134, and Cys136–Cys147. In terms of domain architecture, EGF-like 4; truncated spans 151–175 (GETKCLLKCKAAEECKLTGKHYECV). A lipid anchor (GPI-anchor amidated asparagine) is attached at Asn190. N-linked (GlcNAc...) asparagine glycosylation is present at Asn190. The propeptide at 191 to 213 (SSFMNGMSIISIIALLVIYVIVM) is removed in mature form.

The protein localises to the cell membrane. The protein is 24 kDa ookinete surface protein of Plasmodium berghei (strain Anka).